We begin with the raw amino-acid sequence, 715 residues long: Zinc finger protein 544 (715 aa).

In terms of domain architecture, KRAB spans 14–85 (VCFEDVAMAF…EQEAPRDWKA (72 aa)). Glycyl lysine isopeptide (Lys-Gly) (interchain with G-Cter in SUMO2) cross-links involve residues Lys273 and Lys289. The C2H2-type 1; atypical zinc-finger motif lies at 354–374 (SVCNQCGKSFSCCKLIHQRTH). 12 consecutive C2H2-type zinc fingers follow at residues 380 to 402 (FECT…QRTH), 408 to 430 (YECD…QRIH), 436 to 458 (YQCI…QRIH), 464 to 486 (YECT…KRTH), 492 to 514 (FKCT…QRTH), 520 to 542 (YECN…QRIH), 548 to 570 (YQCI…QRIH), 576 to 598 (YDCT…KRTH), 604 to 626 (YECN…LQIH), 632 to 654 (YKCN…QRTH), 660 to 682 (FECS…HRIH), and 688 to 710 (YECS…RRTH). Residue Lys534 forms a Glycyl lysine isopeptide (Lys-Gly) (interchain with G-Cter in SUMO2) linkage.

Belongs to the krueppel C2H2-type zinc-finger protein family.

The protein localises to the nucleus. Its function is as follows. May be involved in transcriptional regulation. The protein is Zinc finger protein 544 (ZNF544) of Homo sapiens (Human).